The primary structure comprises 370 residues: DnaJ homolog subfamily B member 12 (370 aa).

Met-1 carries the N-acetylmethionine modification. The segment at 51–92 (NQKPQPAGDQPQPTEATHTTHRKAAGANTASANGEAGGESTK) is disordered. In terms of domain architecture, J spans 110-174 (DYYEILGVSR…EKRKQYDQFG (65 aa)). At His-185 the chain carries Pros-methylhistidine. Residues 242-262 (GGLGVFVQLMPILILILVSAL) traverse the membrane as a helical segment.

Belongs to the DnaJ family. DNAJB12/DNAJB14 subfamily. Homodimer and homotetramer. Interacts (via J domain) with HSPA8/Hsc70. Forms a multiprotein complex, at least composed of DNAJB12, DNAJB14, HSPA8/Hsc70 and SGTA; interaction with DNAJB14 and HSPA8/Hsc70 is direct. In terms of processing, methylated at His-185 by METTL9.

Its subcellular location is the endoplasmic reticulum membrane. The protein resides in the nucleus membrane. Functionally, acts as a co-chaperone with HSPA8/Hsc70; required to promote protein folding and trafficking, prevent aggregation of client proteins, and promote unfolded proteins to endoplasmic reticulum-associated degradation (ERAD) pathway. Acts by determining HSPA8/Hsc70's ATPase and polypeptide-binding activities. Can also act independently of HSPA8/Hsc70: together with DNAJB14, acts as a chaperone that promotes maturation of potassium channels KCND2 and KCNH2 by stabilizing nascent channel subunits and assembling them into tetramers. While stabilization of nascent channel proteins is dependent on HSPA8/Hsc70, the process of oligomerization of channel subunits is independent of HSPA8/Hsc70. When overexpressed, forms membranous structures together with DNAJB14 and HSPA8/Hsc70 within the nucleus; the role of these structures, named DJANGOs, is still unclear. The sequence is that of DnaJ homolog subfamily B member 12 (DNAJB12) from Bos taurus (Bovine).